The sequence spans 131 residues: Large ribosomal subunit protein bL17 (131 aa).

Belongs to the bacterial ribosomal protein bL17 family. Part of the 50S ribosomal subunit. Contacts protein L32.

The protein is Large ribosomal subunit protein bL17 of Paraburkholderia phymatum (strain DSM 17167 / CIP 108236 / LMG 21445 / STM815) (Burkholderia phymatum).